The primary structure comprises 156 residues: Cell division protein SepF (156 aa).

The tract at residues 30-49 (NAAAPSTTETSVVRQDDRPK) is disordered.

Belongs to the SepF family. As to quaternary structure, homodimer. Interacts with FtsZ.

It localises to the cytoplasm. Functionally, cell division protein that is part of the divisome complex and is recruited early to the Z-ring. Probably stimulates Z-ring formation, perhaps through the cross-linking of FtsZ protofilaments. Its function overlaps with FtsA. The sequence is that of Cell division protein SepF from Exiguobacterium sp. (strain ATCC BAA-1283 / AT1b).